The primary structure comprises 466 residues: MEPWPCSPGGGGGTRARHVIINVGGCRVRLAWAALARCPLARLERLRACRGHDDLLRVCDDYDVSRDEFFFDRSPCAFRAIVALLRAGKLRLLRGPCALAFRDELAYWGIDEARLERCCLRRLRRREEEAAEARAGPTERGAQGSPARALGPRGRLQRGRRRLRDVVDNPHSGLAGKLFACVSVSFVAVTAVGLCLSTMPDIRAEEERGECSPKCRSLFVLETVCVAWFSFEFLLRSLQAESKCAFLRAPLNIIDILALLPFYVSLLLGLAAGPGGTKLLERAGLVLRLLRALRVLYVMRLARHSLGLRSLGLTMRRCAREFGLLLLFLCVAMALFAPLVHLAERELGARRDFSSVPASYWWAVISMTTVGYGDMVPRSLPGQVVALSSILSGILLMAFPVTSIFHTFSRSYSELKEQQQRAASPEPALQEDSTHSATATEDSSQGPDSAGLADDSADALWVRAGR.

At 1–174 the chain is on the cytoplasmic side; that stretch reads MEPWPCSPGG…DVVDNPHSGL (174 aa). A disordered region spans residues 131–155; it reads AEARAGPTERGAQGSPARALGPRGR. Residues 175 to 196 form a helical membrane-spanning segment; sequence AGKLFACVSVSFVAVTAVGLCL. Residues 197–217 lie on the Extracellular side of the membrane; it reads STMPDIRAEEERGECSPKCRS. Residues 218–239 traverse the membrane as a helical segment; it reads LFVLETVCVAWFSFEFLLRSLQ. The Cytoplasmic portion of the chain corresponds to 240-250; the sequence is AESKCAFLRAP. The chain crosses the membrane as a helical span at residues 251-271; that stretch reads LNIIDILALLPFYVSLLLGLA. At 272 to 283 the chain is on the extracellular side; that stretch reads AGPGGTKLLERA. The chain crosses the membrane as a helical; Voltage-sensor span at residues 284 to 304; it reads GLVLRLLRALRVLYVMRLARH. The Cytoplasmic segment spans residues 305–319; that stretch reads SLGLRSLGLTMRRCA. The helical transmembrane segment at 320–341 threads the bilayer; sequence REFGLLLLFLCVAMALFAPLVH. Over 342-356 the chain is Extracellular; sequence LAERELGARRDFSSV. An intramembrane region (helical) is located at residues 357 to 368; it reads PASYWWAVISMT. A Selectivity filter motif is present at residues 369 to 374; it reads TVGYGD. An intramembrane segment occupies 369 to 376; it reads TVGYGDMV. The Extracellular segment spans residues 377 to 383; the sequence is PRSLPGQ. A helical transmembrane segment spans residues 384–412; sequence VVALSSILSGILLMAFPVTSIFHTFSRSY. Over 413–466 the chain is Cytoplasmic; the sequence is SELKEQQQRAASPEPALQEDSTHSATATEDSSQGPDSAGLADDSADALWVRAGR. Residues 416-466 form a disordered region; sequence KEQQQRAASPEPALQEDSTHSATATEDSSQGPDSAGLADDSADALWVRAGR. Positions 435–447 are enriched in polar residues; sequence HSATATEDSSQGP. The segment covering 448–460 has biased composition (low complexity); that stretch reads DSAGLADDSADAL.

The protein belongs to the potassium channel family. G (TC 1.A.1.2) subfamily. Kv6.2/KCNG2 sub-subfamily. In terms of assembly, heterodimer with KCNB1. As to expression, highly expressed in heart, liver, skeletal muscle, kidney and pancreas. Detected at low levels in brain, lung and placenta.

It is found in the cell membrane. Regulatory alpha-subunit of the voltage-gated potassium (Kv) channel which, when coassembled with KCNB1, can modulate the kinetics and conductance-voltage relationship. Modulates channel activity by shifting the threshold and the half-maximal activation to more negative values. Potassium channel subunit that does not form functional channels by itself. The protein is Voltage-gated potassium channel regulatory subunit KCNG2 of Homo sapiens (Human).